The following is a 302-amino-acid chain: Glutaminase (302 aa).

Residues serine 61, asparagine 111, glutamate 155, asparagine 162, tyrosine 186, tyrosine 238, and valine 256 each contribute to the substrate site.

It belongs to the glutaminase family. In terms of assembly, homotetramer.

The catalysed reaction is L-glutamine + H2O = L-glutamate + NH4(+). The polypeptide is Glutaminase (Pseudomonas savastanoi pv. phaseolicola (strain 1448A / Race 6) (Pseudomonas syringae pv. phaseolicola (strain 1448A / Race 6))).